Reading from the N-terminus, the 33-residue chain is Brevinin 2AV (33 aa).

Cys-27 and Cys-33 are joined by a disulfide.

As to expression, expressed by the skin glands.

It is found in the secreted. Functionally, has antibacterial activity. This Rana arvalis (Moor frog) protein is Brevinin 2AV.